The primary structure comprises 632 residues: Bestrophin homolog 24 (632 aa).

Transmembrane regions (helical) follow at residues 28 to 48 (IWKAVILELAVWLVLYGILSV), 83 to 103 (GFFVTAVVNRWTYLYQIIGFI), 234 to 254 (IMYPQLVCLAVHTYFLVCLLA), and 271 to 291 (LYFPIMSTLQFIFYMGWMKVA). Disordered regions lie at residues 491-516 (LSNKRIDTSSSQPQLATGKRGSEHPF) and 562-632 (ETEV…TKFE). The segment covering 563–602 (TEVKRDEKKKKEEELREEGDNGKEEKDNKEDKKEEQDRPS) has biased composition (basic and acidic residues). Basic residues predominate over residues 623 to 632 (PHLRPPTKFE).

It belongs to the anion channel-forming bestrophin (TC 1.A.46) family. Calcium-sensitive chloride channel subfamily. Forms oligomers.

It is found in the cell membrane. Functionally, forms chloride channels. The sequence is that of Bestrophin homolog 24 (best-24) from Caenorhabditis elegans.